The following is a 247-amino-acid chain: Geranylgeranylglyceryl phosphate synthase (247 aa).

Residues Asp-23 and Ser-52 each contribute to the Mg(2+) site. Sn-glycerol 1-phosphate is bound by residues 171–177, 203–204, and 225–226; these read YLEAGSG, GG, and GT.

The protein belongs to the GGGP/HepGP synthase family. Group II subfamily. The cofactor is Mg(2+).

The protein localises to the cytoplasm. The catalysed reaction is sn-glycerol 1-phosphate + (2E,6E,10E)-geranylgeranyl diphosphate = sn-3-O-(geranylgeranyl)glycerol 1-phosphate + diphosphate. It functions in the pathway membrane lipid metabolism; glycerophospholipid metabolism. Prenyltransferase that catalyzes the transfer of the geranylgeranyl moiety of geranylgeranyl diphosphate (GGPP) to the C3 hydroxyl of sn-glycerol-1-phosphate (G1P). This reaction is the first ether-bond-formation step in the biosynthesis of archaeal membrane lipids. The polypeptide is Geranylgeranylglyceryl phosphate synthase (Methanosarcina acetivorans (strain ATCC 35395 / DSM 2834 / JCM 12185 / C2A)).